Reading from the N-terminus, the 424-residue chain is Enolase (424 aa).

Residue Q165 participates in (2R)-2-phosphoglycerate binding. E207 acts as the Proton donor in catalysis. D244, E283, and D310 together coordinate Mg(2+). (2R)-2-phosphoglycerate-binding residues include K335, R364, S365, and K386. K335 functions as the Proton acceptor in the catalytic mechanism.

This sequence belongs to the enolase family. Mg(2+) is required as a cofactor.

The protein localises to the cytoplasm. It is found in the secreted. The protein resides in the cell surface. It catalyses the reaction (2R)-2-phosphoglycerate = phosphoenolpyruvate + H2O. The protein operates within carbohydrate degradation; glycolysis; pyruvate from D-glyceraldehyde 3-phosphate: step 4/5. Its function is as follows. Catalyzes the reversible conversion of 2-phosphoglycerate (2-PG) into phosphoenolpyruvate (PEP). It is essential for the degradation of carbohydrates via glycolysis. The protein is Enolase of Chlamydia trachomatis serovar D (strain ATCC VR-885 / DSM 19411 / UW-3/Cx).